The primary structure comprises 404 residues: tRNA (carboxymethyluridine(34)-5-O)-methyltransferase (404 aa).

Position 238 is a phosphoserine (Ser238).

Interacts with TRM112A and TRM112B.

The catalysed reaction is 5-(carboxymethyl)uridine(34) in tRNA + S-adenosyl-L-methionine = 5-(2-methoxy-2-oxoethyl)uridine(34) in tRNA + S-adenosyl-L-homocysteine. Its function is as follows. Catalyzes the methylation of 5-carboxymethyl uridine to 5-methylcarboxymethyl uridine at the wobble position of the anticodon loop in tRNA via its methyltransferase domain. Catalyzes the last step in the formation of 5-methylcarboxymethyl uridine at the wobble position of the anticodon loop in target tRNA. The sequence is that of tRNA (carboxymethyluridine(34)-5-O)-methyltransferase from Arabidopsis thaliana (Mouse-ear cress).